Here is a 446-residue protein sequence, read N- to C-terminus: Lysine histidine transporter 1 (446 aa).

At 1–37 the chain is on the cytoplasmic side; it reads MVAQAPHDDHQDDEKLAAARQKEIEDWLPITSSRNAK. The helical transmembrane segment at 38 to 58 threads the bilayer; the sequence is WWYSAFHNVTAMVGAGVLGLP. Residues 59–63 are Extracellular-facing; sequence YAMSQ. Residues 64 to 84 form a helical membrane-spanning segment; the sequence is LGWGPGIAVLVLSWVITLYTL. At 85 to 115 the chain is on the cytoplasmic side; sequence WQMVEMHEMVPGKRFDRYHELGQHAFGEKLG. The chain crosses the membrane as a helical span at residues 116-136; sequence LYIVVPQQLIVEIGVCIVYMV. At 137–157 the chain is on the extracellular side; the sequence is TGGKSLKKFHELVCDDCKPIK. Residues 158 to 178 form a helical membrane-spanning segment; sequence LTYFIMIFASVHFVLSHLPNF. Residues 179–180 are Cytoplasmic-facing; it reads NS. A helical transmembrane segment spans residues 181–201; the sequence is ISGVSLAAAVMSLSYSTIAWA. Over 202-227 the chain is Extracellular; sequence SSASKGVQEDVQYGYKAKTTAGTVFN. A helical membrane pass occupies residues 228 to 248; it reads FFSGLGDVAFAYAGHNVVLEI. Residues 249–268 are Cytoplasmic-facing; that stretch reads QATIPSTPEKPSKGPMWRGV. Residues 269-289 traverse the membrane as a helical segment; that stretch reads IVAYIVVALCYFPVALVGYYI. Residues 290 to 305 are Extracellular-facing; the sequence is FGNGVEDNILMSLKKP. Residues 306-326 form a helical membrane-spanning segment; that stretch reads AWLIATANIFVVIHVIGSYQI. The Cytoplasmic portion of the chain corresponds to 327-352; the sequence is YAMPVFDMMETLLVKKLNFRPTTTLR. The chain crosses the membrane as a helical span at residues 353-375; that stretch reads FFVRNFYVAATMFVGMTFPFFGG. Residues 376–378 lie on the Extracellular side of the membrane; sequence LLA. The chain crosses the membrane as a helical span at residues 379–401; the sequence is FFGGFAFAPTTYFLPCVIWLAIY. Topologically, residues 402–409 are cytoplasmic; it reads KPKKYSLS. A helical transmembrane segment spans residues 410–430; the sequence is WWANWVCIVFGLFLMVLSPIG. Residues 431-446 are Extracellular-facing; the sequence is GLRTIVIQAKGYKFYS.

This sequence belongs to the amino acid/polyamine transporter 2 family. Amino acid/auxin permease (AAAP) (TC 2.A.18.2) subfamily. In terms of tissue distribution, expressed in roots, stems, flowers, leaves, siliques and pollen. Found in the tips of roots and in the rhizodermis of emerging roots and in lateral roots. Higher expression in older leaves as compared to joung leaves. Detected first at the hydathodes, then in the epidermis and finally in matures leaves in all mesophyll cells. Not detected in vascular bundles or in seeds.

Its subcellular location is the cell membrane. With respect to regulation, inhibited by carbonlycyanide m-chlorophenylhydrazone (CCCP) and DEPC. Its function is as follows. Amino acid-proton symporter. Transporter with a broad specificity for histidine, lysine, glutamic acid, alanine, serine, proline and glycine. Involved in both apoplastic transport of amino acids in leaves and their uptake by roots. This is Lysine histidine transporter 1 (LHT1) from Arabidopsis thaliana (Mouse-ear cress).